The primary structure comprises 280 residues: Four and a half LIM domains protein 3 (280 aa).

Ser-2 bears the N-acetylserine mark. Residues 7–31 form a C4-type zinc finger; sequence CAKCNESLYGRKYIQTDSGPYCVPC. LIM zinc-binding domains follow at residues 40 to 92 and 101 to 153; these read CAEC…CNDC and CSAC…CVPC. Lys-157 is subject to N6-acetyllysine. 2 consecutive LIM zinc-binding domains span residues 162–212 and 221–275; these read CARC…CVAC and CSSC…CQGC. At Lys-235 the chain carries N6-acetyllysine.

Interacts with SOX15; the interaction recruits FHL3 to FOXK1 promoters where it acts as a transcriptional coactivator of FOXK1. Expressed only in skeletal muscle.

Its subcellular location is the nucleus. It localises to the cytoplasm. Recruited by SOX15 to FOXK1 promoters where it acts as a transcriptional coactivator of FOXK1. This chain is Four and a half LIM domains protein 3 (FHL3), found in Homo sapiens (Human).